We begin with the raw amino-acid sequence, 121 residues long: Non-structural protein 8 (121 aa).

An N-terminal signal peptide occupies residues 1–15 (MKLLIVFGLLTSVYC). An SARS ORF8 Ig-like domain is found at 19–121 (ECSIQECCEN…HDVRVVLDFI (103 aa)). 3 disulfides stabilise this stretch: Cys25–Cys90, Cys37–Cys102, and Cys61–Cys83.

The protein is Non-structural protein 8 of Rhinolophus macrotis (Big-eared horseshoe bat).